Consider the following 229-residue polypeptide: Lactate utilization protein C (229 aa).

Belongs to the LutC/YkgG family.

In terms of biological role, is involved in L-lactate degradation and allows cells to grow with lactate as the sole carbon source. The chain is Lactate utilization protein C from Shouchella clausii (strain KSM-K16) (Alkalihalobacillus clausii).